The following is a 460-amino-acid chain: Serine--tRNA ligase (460 aa).

A compositionally biased stretch (basic and acidic residues) spans A43–G66. The tract at residues A43–L81 is disordered. Residue T242–E244 coordinates L-serine. ATP is bound by residues R273–E275 and V289. E296 is a binding site for L-serine. E369 to S372 serves as a coordination point for ATP. S405 provides a ligand contact to L-serine.

The protein belongs to the class-II aminoacyl-tRNA synthetase family. Type-1 seryl-tRNA synthetase subfamily. As to quaternary structure, homodimer. The tRNA molecule binds across the dimer.

Its subcellular location is the cytoplasm. It catalyses the reaction tRNA(Ser) + L-serine + ATP = L-seryl-tRNA(Ser) + AMP + diphosphate + H(+). The catalysed reaction is tRNA(Sec) + L-serine + ATP = L-seryl-tRNA(Sec) + AMP + diphosphate + H(+). It functions in the pathway aminoacyl-tRNA biosynthesis; selenocysteinyl-tRNA(Sec) biosynthesis; L-seryl-tRNA(Sec) from L-serine and tRNA(Sec): step 1/1. Catalyzes the attachment of serine to tRNA(Ser). Is also probably able to aminoacylate tRNA(Sec) with serine, to form the misacylated tRNA L-seryl-tRNA(Sec), which will be further converted into selenocysteinyl-tRNA(Sec). This Haloarcula marismortui (strain ATCC 43049 / DSM 3752 / JCM 8966 / VKM B-1809) (Halobacterium marismortui) protein is Serine--tRNA ligase (serS).